The chain runs to 237 residues: Small ribosomal subunit protein uS3 (237 aa).

The region spanning 39–107 (IRAYLMEELK…ETHLNIVEVR (69 aa)) is the KH type-2 domain. The disordered stretch occupies residues 213–237 (MASERRATESDNQGGSGRERRRENA).

This sequence belongs to the universal ribosomal protein uS3 family. Part of the 30S ribosomal subunit. Forms a tight complex with proteins S10 and S14.

Binds the lower part of the 30S subunit head. Binds mRNA in the 70S ribosome, positioning it for translation. The protein is Small ribosomal subunit protein uS3 of Rhizobium meliloti (strain 1021) (Ensifer meliloti).